Here is a 348-residue protein sequence, read N- to C-terminus: Rhodopsin (348 aa).

N-acetylmethionine is present on M1. Topologically, residues 1-36 are extracellular; the sequence is MNGTEGPNFYVPFSNATGVVRSPFEYPQYYLAEPWQ. Residues N2 and N15 are each glycosylated (N-linked (GlcNAc...) asparagine). Residues 37–61 form a helical membrane-spanning segment; it reads FSMLAAYMFMLIVLGFPINFLTLYV. Residues 62–73 are Cytoplasmic-facing; sequence TVQHKKLRTPLN. Residues 74 to 96 form a helical membrane-spanning segment; that stretch reads YILLNLAVADLFMVFGGFTTTLY. Over 97–110 the chain is Extracellular; the sequence is TSLHGYFVFGPTGC. An intrachain disulfide couples C110 to C187. A helical transmembrane segment spans residues 111–133; the sequence is NLEGFFATLGGEIALWSLVVLAI. The 'Ionic lock' involved in activated form stabilization motif lies at 134–136; the sequence is ERY. Topologically, residues 134–152 are cytoplasmic; sequence ERYVVVCKPMSNFRFGENH. A helical transmembrane segment spans residues 153 to 173; that stretch reads AIMGLVFTWIMALACAAPPLV. The Extracellular segment spans residues 174–202; it reads GWSRYIPEGMQCSCGIDYYTLKPEVNNES. E201 contributes to the Zn(2+) binding site. A helical membrane pass occupies residues 203-224; sequence FVIYMFVVHFFIPLFVIFFCYG. The Cytoplasmic segment spans residues 225–252; that stretch reads QLVFTVKEAAAQQQESATTQKAEKEVTR. A helical transmembrane segment spans residues 253–274; the sequence is MVIIMVIAFLICWLPYAGVAFY. At 275–286 the chain is on the extracellular side; that stretch reads IFTHQGSNFGPI. Position 279 (Q279) interacts with Zn(2+). Residues 287-308 traverse the membrane as a helical segment; that stretch reads FMTLPAFFAKTASIYNPVIYIM. K296 is subject to N6-(retinylidene)lysine. Residues 309-348 lie on the Cytoplasmic side of the membrane; it reads MNKQFRTCMITTLCCGKNPLGDDEASTTASKTETSQVAPA. Residues C322 and C323 are each lipidated (S-palmitoyl cysteine). An interaction with SAG region spans residues 330–348; sequence DDEASTTASKTETSQVAPA. S334 is modified (phosphoserine). T335 and T336 each carry phosphothreonine. S338 carries the phosphoserine modification. Phosphothreonine occurs at positions 340 and 342. Position 343 is a phosphoserine (S343).

It belongs to the G-protein coupled receptor 1 family. Opsin subfamily. As to quaternary structure, homodimer. May form a complex composed of RHO, GRK1 and RCVRN in a Ca(2+)-dependent manner; RCVRN prevents the interaction between GRK1 and RHO. Interacts with GRK1. Interacts (phosphorylated form) with SAG. Interacts with GNAT1. Interacts with GNAT3. SAG and G-proteins compete for a common binding site. Interacts with PRCD; the interaction promotes PRCD stability. Forms a complex with ASAP1 and ARF4. Forms a complex with ASAP1, RAB11A, Rabin8/RAB3IP, ARF4 and RAB11FIP3; the complex regulates Golgi-to-cilia rhodopsin/RHO transport in photoreceptors. Post-translationally, phosphorylated on some or all of the serine and threonine residues present in the C-terminal region. Contains one covalently linked retinal chromophore. Upon light absorption, the covalently bound 11-cis-retinal is converted to all-trans-retinal. After hydrolysis of the Schiff base and release of the covalently bound all-trans-retinal, active rhodopsin is regenerated by binding of a fresh molecule of 11-cis-retinal.

The protein resides in the membrane. Its subcellular location is the cell projection. It localises to the cilium. It is found in the photoreceptor outer segment. Functionally, photoreceptor required for image-forming vision at low light intensity. Required for photoreceptor cell viability after birth. Light-induced isomerization of 11-cis to all-trans retinal triggers a conformational change that activates signaling via G-proteins. Subsequent receptor phosphorylation mediates displacement of the bound G-protein alpha subunit by the arrestin SAG and terminates signaling. The sequence is that of Rhodopsin (RHO) from Otolemur crassicaudatus (Brown greater galago).